An 881-amino-acid polypeptide reads, in one-letter code: DNA replication helicase (881 aa).

The tract at residues 1–26 (MAASGGEGSRDVRAPGPPPQQPGARP) is disordered. 96-103 (GNAGSGKS) is an ATP binding site.

Belongs to the herpesviridae helicase family. Associates with the primase and the primase-associated factor to form the helicase-primase complex.

It localises to the host nucleus. Component of the helicase/primase complex. Unwinds the DNA at the replication forks and generates single-stranded DNA for both leading and lagging strand synthesis. The primase synthesizes short RNA primers on the lagging strand that the polymerase elongates using dNTPs. Possesses helicase-like motifs and therefore may act as the helicase subunit of the complex. The protein is DNA replication helicase of Human herpesvirus 2 (strain HG52) (HHV-2).